We begin with the raw amino-acid sequence, 232 residues long: Phospholipase A2 hemilipin (232 aa).

Residues 1–18 (MTFLILTILATVTPSLYS) form the signal peptide. Residues 19-105 (HVVQRELRVN…QRCSGSAEGR (87 aa)) constitute a propeptide that is removed on maturation. W115, G117, and G119 together coordinate Ca(2+). Cystine bridges form between C116/C137, C136/C175, C143/C168, C166/C206, and C211/C219. N124 carries an N-linked (GlcNAc...) asparagine glycan. Residue H140 is part of the active site. Residue D141 coordinates Ca(2+). N-linked (GlcNAc...) asparagine glycosylation is present at N157. Positions 214 to 217 (KRDA) are excised as a propeptide.

It belongs to the phospholipase A2 family. Group III subfamily. In terms of assembly, heterodimer composed of a small subunit and a large subunit; disulfid-linked. The cofactor is Ca(2+). In terms of tissue distribution, expressed by the venom gland.

Its subcellular location is the secreted. The enzyme catalyses a 1,2-diacyl-sn-glycero-3-phosphocholine + H2O = a 1-acyl-sn-glycero-3-phosphocholine + a fatty acid + H(+). Scorpion venom phospholipase A2 (PLA2) that shows high hydrolytic activities towards lecithin and acts as an effective blocker of all angiogenesis key steps in vivo and in vitro. It has no effect on apoptosis and does not display hemolytic, inflammatory or neurotoxic effects. PLA2 catalyzes the calcium-dependent hydrolysis of the 2-acyl groups in 3-sn-phosphoglycerides. The chain is Phospholipase A2 hemilipin from Hemiscorpius lepturus (Scorpion).